The sequence spans 711 residues: Tyrosine-protein phosphatase 2 (711 aa).

Residues 21-130 (TESVSWIIDL…FASSHPDAIV (110 aa)) form the Rhodanese domain. Disordered stretches follow at residues 275 to 306 (APQQTPARPSLRSVPSYPSSNNQRRPSASRVR) and 329 to 376 (IIPR…RANK). Polar residues-rich tracts occupy residues 290-306 (SYPSSNNQRRPSASRVR) and 340-363 (NAQNDGTSTMTSKLKPSVGLSNTR). Residues 433 to 698 (EMTRSLAFND…KFLYDVVDYL (266 aa)) form the Tyrosine-protein phosphatase domain. Cysteine 630 functions as the Phosphocysteine intermediate in the catalytic mechanism.

It belongs to the protein-tyrosine phosphatase family. Non-receptor class subfamily.

The protein localises to the cytoplasm. It catalyses the reaction O-phospho-L-tyrosyl-[protein] + H2O = L-tyrosyl-[protein] + phosphate. In terms of biological role, plays a role in inhibiting the onset of mitosis. Dephosphorylates sty1/spc1 and wis1/spc2/sty2. This Schizosaccharomyces pombe (strain 972 / ATCC 24843) (Fission yeast) protein is Tyrosine-protein phosphatase 2 (pyp2).